Here is a 111-residue protein sequence, read N- to C-terminus: 2Fe-2S ferredoxin (111 aa).

A 2Fe-2S ferredoxin-type domain is found at Met-1–Asn-104. Cys-42, Cys-48, Cys-51, and Cys-87 together coordinate [2Fe-2S] cluster.

It belongs to the adrenodoxin/putidaredoxin family. Requires [2Fe-2S] cluster as cofactor.

Functionally, ferredoxin are iron-sulfur proteins that transfer electrons in a wide variety of metabolic reactions. This chain is 2Fe-2S ferredoxin (fdx), found in Buchnera aphidicola subsp. Acyrthosiphon pisum (strain APS) (Acyrthosiphon pisum symbiotic bacterium).